Consider the following 314-residue polypeptide: uncharacterized protein (314 aa).

The disordered stretch occupies residues 1–70 (MAGNSQRRGA…QGRHKKTDDT (70 aa)). A compositionally biased stretch (basic residues) spans 43–65 (QRPHHPAGKRAAKAARQAQGRHK). S-adenosyl-L-methionine is bound by residues Gly265, Ile285, and Leu294.

Belongs to the class IV-like SAM-binding methyltransferase superfamily. RNA methyltransferase TrmH family.

This is an uncharacterized protein from Mycolicibacterium vanbaalenii (strain DSM 7251 / JCM 13017 / BCRC 16820 / KCTC 9966 / NRRL B-24157 / PYR-1) (Mycobacterium vanbaalenii).